We begin with the raw amino-acid sequence, 130 residues long: uncharacterized protein (130 aa).

The interval 85–116 (NDSDDDCSENDSDGDCSENDSDNDYSENESDC) is disordered.

The protein belongs to the mimivirus L5 family.

This is an uncharacterized protein from Acanthamoeba polyphaga mimivirus (APMV).